Reading from the N-terminus, the 187-residue chain is Probable nicotinate-nucleotide adenylyltransferase (187 aa).

This sequence belongs to the NadD family.

It carries out the reaction nicotinate beta-D-ribonucleotide + ATP + H(+) = deamido-NAD(+) + diphosphate. The protein operates within cofactor biosynthesis; NAD(+) biosynthesis; deamido-NAD(+) from nicotinate D-ribonucleotide: step 1/1. Catalyzes the reversible adenylation of nicotinate mononucleotide (NaMN) to nicotinic acid adenine dinucleotide (NaAD). This is Probable nicotinate-nucleotide adenylyltransferase from Anaeromyxobacter dehalogenans (strain 2CP-C).